A 2055-amino-acid polypeptide reads, in one-letter code: Protein PHOTOPERIOD-INDEPENDENT EARLY FLOWERING 1 (2055 aa).

Residues 1 to 47 (MASKGGKSKPDIVMASKSGKSKPDNESRAKRQKTLEAPKEPRRPKTH) form a disordered region. Residues 21–47 (SKPDNESRAKRQKTLEAPKEPRRPKTH) show a composition bias toward basic and acidic residues. A Nuclear localization signal 1 motif is present at residues 29-36 (AKRQKTLE). The HSA domain maps to 35–107 (LEAPKEPRRP…EEQRLRKVAL (73 aa)). Coiled coils occupy residues 78 to 147 (LRAS…LEFL) and 229 to 250 (EEDE…LQNE). Disordered stretches follow at residues 183 to 332 (KSDE…SNDS) and 340 to 359 (ETHS…KSRK). Over residues 208–230 (ELDEDYDLKSEDETEDDEDTIEE) the composition is skewed to acidic residues. 2 stretches are compositionally biased toward basic and acidic residues: residues 231-243 (DEKH…RQEE) and 267-276 (VSRETSPVKD). Residues 392–416 (EEELAKADNEDHVEEIALLQKESEM) adopt a coiled-coil conformation. A disordered region spans residues 432–461 (KDISEDESESSFAVSEDSIVDSDENRQQAD). The 166-residue stretch at 548 to 713 (VTMYEKKLNG…WSLMHFLMPH (166 aa)) folds into the Helicase ATP-binding domain. 561–568 (DEMGLGKT) contributes to the ATP binding site. A DEAH box motif is present at residues 664–667 (DEAH). In terms of domain architecture, Helicase C-terminal spans 1076–1229 (KLQELAMLLR…NLVIQNGEYN (154 aa)). A disordered region spans residues 1293–1313 (EEAVDNQEFTEEPVERPEDDE). Residues 1419–1492 (FEEKEWELDH…EREAAEVAEM (74 aa)) adopt a coiled-coil conformation. 2 consecutive short sequence motifs (nuclear localization signal) follow at residues 1506 to 1513 (KKKKKAKK) and 1570 to 1577 (KKRDLIVD). The segment at 1577-1597 (DTDEEKTSKKKAKKHKKSLPN) is disordered. The span at 1584 to 1594 (SKKKAKKHKKS) shows a compositional bias: basic residues. The Myb-like domain maps to 1673 to 1727 (SWLPQEDAILCAMVHEYGPNWNFVSGTLYGMTAGGAYRGRYRHPAYCCERYRELI). Disordered stretches follow at residues 1843-1864 (ALQD…LQET) and 1951-1977 (KSRT…STKS). Residues 1844-1864 (LQDSGPSQPDNTISRSRLQET) show a composition bias toward polar residues. Residues 2006–2029 (GDREEEEEQEVDEKANSAEIEMIS) adopt a coiled-coil conformation.

This sequence belongs to the SNF2/RAD54 helicase family. SWR1 subfamily. Component of the SWR1 chromatin-remodeling complex composed of at least ARP6/ESD1/SUF3, PIE1, SWC6, SWC2 and H2AZs (HTA8, HTA9, HTA11). Interacts (via c-terminus) with SWC6 and ARP6 and (via N-terminus) with H2AZs. In terms of tissue distribution, expressed in ovules, but not in stamens.

Its subcellular location is the nucleus. The enzyme catalyses ATP + H2O = ADP + phosphate + H(+). Functionally, component of the SWR1 complex which mediates the ATP-dependent exchange of histone H2A for the H2A variant H2A.F/Z leading to transcriptional regulation of selected genes (e.g. FLC) by chromatin remodeling. Probable DNA-dependent ATPase. Not involved in the repression of FLC in gametophytes, but required for the reactivation of FLC in early embryos and for the maintenance of full activation of FLC in late embryos. The polypeptide is Protein PHOTOPERIOD-INDEPENDENT EARLY FLOWERING 1 (PIE1) (Arabidopsis thaliana (Mouse-ear cress)).